A 138-amino-acid chain; its full sequence is MEKFLKPNKAVILLQGKYAGRKAVIVRAFDEGTRDRPYGHCLVAGISRYPKKVIRKDSAKKAGKKSRVKAFIKLVNYNHIMPTRYTLDEDLKDVVKDVVNADVLQARDKKVTARRTKARLAERFKTGKNRWFFTKLRF.

This sequence belongs to the eukaryotic ribosomal protein eL27 family.

This Solanum tuberosum (Potato) protein is Large ribosomal subunit protein eL27 (RPL27).